A 905-amino-acid chain; its full sequence is Alanine--tRNA ligase (905 aa).

4 residues coordinate Zn(2+): His-595, His-599, Cys-696, and His-700.

It belongs to the class-II aminoacyl-tRNA synthetase family. The cofactor is Zn(2+).

It is found in the cytoplasm. The catalysed reaction is tRNA(Ala) + L-alanine + ATP = L-alanyl-tRNA(Ala) + AMP + diphosphate. Catalyzes the attachment of alanine to tRNA(Ala) in a two-step reaction: alanine is first activated by ATP to form Ala-AMP and then transferred to the acceptor end of tRNA(Ala). Also edits incorrectly charged Ser-tRNA(Ala) and Gly-tRNA(Ala) via its editing domain. This Anaeromyxobacter dehalogenans (strain 2CP-C) protein is Alanine--tRNA ligase.